Consider the following 138-residue polypeptide: MAKSIPKIGSRKTGRIGSRKHPRKIPKGVIYIQASFNNTIVTVTDVRGRVISWSSAGSCGFKGTRRGTPFAAQTAAGNAIQTVVEQGMQRAEVRIKGPGLGRDAALRAIYRSGILLKVIRDVTPLPHNGCRAPKKRRV.

The tract at residues 1–21 (MAKSIPKIGSRKTGRIGSRKH) is disordered. Over residues 9-21 (GSRKTGRIGSRKH) the composition is skewed to basic residues.

This sequence belongs to the universal ribosomal protein uS11 family. As to quaternary structure, part of the 30S ribosomal subunit.

The protein localises to the plastid. It is found in the chloroplast. In Pisum sativum (Garden pea), this protein is Small ribosomal subunit protein uS11c.